A 473-amino-acid polypeptide reads, in one-letter code: 3-isopropylmalate dehydratase large subunit (473 aa).

3 residues coordinate [4Fe-4S] cluster: cysteine 348, cysteine 408, and cysteine 411.

Belongs to the aconitase/IPM isomerase family. LeuC type 1 subfamily. In terms of assembly, heterodimer of LeuC and LeuD. Requires [4Fe-4S] cluster as cofactor.

The catalysed reaction is (2R,3S)-3-isopropylmalate = (2S)-2-isopropylmalate. The protein operates within amino-acid biosynthesis; L-leucine biosynthesis; L-leucine from 3-methyl-2-oxobutanoate: step 2/4. Catalyzes the isomerization between 2-isopropylmalate and 3-isopropylmalate, via the formation of 2-isopropylmaleate. This chain is 3-isopropylmalate dehydratase large subunit, found in Haloarcula marismortui (strain ATCC 43049 / DSM 3752 / JCM 8966 / VKM B-1809) (Halobacterium marismortui).